The chain runs to 340 residues: Heat-inducible transcription repressor HrcA (340 aa).

It belongs to the HrcA family.

Functionally, negative regulator of class I heat shock genes (grpE-dnaK-dnaJ and groELS operons). Prevents heat-shock induction of these operons. The polypeptide is Heat-inducible transcription repressor HrcA (Burkholderia mallei (strain NCTC 10247)).